Here is a 187-residue protein sequence, read N- to C-terminus: Early E3 20.6 kDa glycoprotein (187 aa).

N-linked (GlcNAc...) asparagine; by host glycans are attached at residues Asn30, Asn73, Asn117, Asn134, and Asn135.

It belongs to the adenoviridae E3_20 family.

In Human adenovirus B serotype 11 (strain Slobiski) (HAdV-11), this protein is Early E3 20.6 kDa glycoprotein.